A 139-amino-acid chain; its full sequence is D-ribose pyranase (139 aa).

Residue His20 is the Proton donor of the active site. Residues Asp28, His106, and 128-130 each bind substrate; that span reads YAN.

Belongs to the RbsD / FucU family. RbsD subfamily. As to quaternary structure, homodecamer.

Its subcellular location is the cytoplasm. The catalysed reaction is beta-D-ribopyranose = beta-D-ribofuranose. Its pathway is carbohydrate metabolism; D-ribose degradation; D-ribose 5-phosphate from beta-D-ribopyranose: step 1/2. Catalyzes the interconversion of beta-pyran and beta-furan forms of D-ribose. This chain is D-ribose pyranase, found in Aeromonas salmonicida (strain A449).